A 469-amino-acid polypeptide reads, in one-letter code: Protein RUFY3 (469 aa).

Phosphothreonine occurs at positions 5 and 12. A phosphoserine mark is found at Y27, S34, and S49. T51 is modified (phosphothreonine). D53 carries the phosphoserine modification. Positions 95–227 (DSDYAPLQQF…IDANFCMKGE (133 aa)) constitute an RUN domain. Coiled coils occupy residues 271 to 362 (NRHL…VEKE) and 422 to 463 (KSEL…AANK). The segment covering 321 to 337 (SYLLESNRKGPKQDRTA) has biased composition (basic and acidic residues). The segment at 321–342 (SYLLESNRKGPKQDRTAEGQAL) is disordered.

Interacts with PAK1. Interacts (via C-terminus) with Ras-related Rab-5 proteins. Interacts (via C-terminus) with Ras-related Rap-2 proteins. Interacts with PIK3CA and PIK3R1. Interacts (via N-terminus) with FSCN1; this interaction induces neuron axon development. Interacts with DBN1. Interacts (via the second coiled coil) with GTP-, but not GDP-bound ARL8A and ARL8B. Interacts with dynactin/DCTN1 and the dynein intermediate chain DYNC1I1/2. Directly interacts with DYNC1LI1. Post-translationally, phosphorylated by PAK1. Isoform 1 is partially phosphorylated. In terms of tissue distribution, expressed in brain (at protein level).

It is found in the cytoplasm. It localises to the endomembrane system. Its subcellular location is the cell projection. The protein localises to the invadopodium. The protein resides in the growth cone. It is found in the perikaryon. It localises to the filopodium. Its subcellular location is the lamellipodium. The protein localises to the lysosome. Functionally, ARL8 effector that promotes the coupling of endolysosomes to dynein-dynactin for retrograde transport along microtubules. Acts by binding both GTP-bound ARL8 and dynein-dynactin. In nonneuronal cells, promotes concentration of endolysosomes in the juxtanuclear area. In hippocampal neurons, drives retrograde transport of endolysosomes from the axon to the soma. Plays a role in the generation of neuronal polarity formation and axon growth. Implicated in the formation of a single axon by developing neurons. May inhibit the formation of additional axons by inhibition of PI3K in minor neuronal processes. Plays a role in the formation of F-actin-enriched protrusive structures at the cell periphery. Plays a role in cytoskeletal organization by regulating the subcellular localization of FSCN1 and DBN1 at axonal growth cones. The protein is Protein RUFY3 of Mus musculus (Mouse).